The following is a 461-amino-acid chain: Coagulation factor IX (461 aa).

Positions 1–28 are cleaved as a signal peptide; it reads MQRVNMIMAESPGLITICLLGYLLSAEC. Positions 29 to 46 are excised as a propeptide; the sequence is TVFLDHENANKILNRPKR. Ca(2+)-binding residues include Tyr-47, Asn-48, Glu-53, Glu-54, Glu-61, Glu-63, Glu-66, Glu-67, Glu-72, Glu-73, and Glu-76. The 46-residue stretch at 47–92 folds into the Gla domain; that stretch reads YNSGKLEEFVQGNLERECMEEKCSFEEAREVFENTERTTEFWKQYV. 11 positions are modified to 4-carboxyglutamate: Glu-53, Glu-54, Glu-61, Glu-63, Glu-66, Glu-67, Glu-72, Glu-73, Glu-76, Glu-79, and Glu-82. A Mg(2+)-binding site is contributed by Glu-61. A disulfide bridge links Cys-64 with Cys-69. Glu-66 provides a ligand contact to Mg(2+). Residue Glu-72 participates in Mg(2+) binding. Residue Glu-76 participates in Mg(2+) binding. Residue Glu-82 coordinates Ca(2+). Glu-82 is a Mg(2+) binding site. O-linked (GalNAc...) threonine glycosylation is present at Thr-85. Glu-86, Asp-93, Gly-94, and Gln-96 together coordinate Ca(2+). Glu-86 carries the 4-carboxyglutamate modification. Residue Glu-86 participates in Mg(2+) binding. Residues 93–129 enclose the EGF-like 1; calcium-binding domain; the sequence is DGDQCESNPCLNGGSCKDDINSYECWCPFGFEGKNCE. Cystine bridges form between Cys-97-Cys-108, Cys-102-Cys-117, Cys-119-Cys-128, Cys-134-Cys-145, Cys-141-Cys-155, Cys-157-Cys-170, Cys-178-Cys-335, Cys-252-Cys-268, Cys-382-Cys-396, and Cys-407-Cys-435. Ser-99 carries an O-linked (Glc...) serine glycan. The O-linked (Fuc...) serine glycan is linked to Ser-107. Residues Asp-110 and Asp-111 each coordinate Ca(2+). Asp-110 carries the (3R)-3-hydroxyaspartate modification. Ser-114 carries the post-translational modification Phosphoserine. The region spanning 130–171 is the EGF-like 2 domain; sequence LDVTCNIKNGRCEQFCKNSADNKVVCSCTEGYRLAENQKSCE. Positions 192-226 are cleaved as a propeptide — activation peptide; it reads AETVFPDVDYVNSTEAETILDNITQSTQSFNDFTR. At Tyr-201 the chain carries Sulfotyrosine. Residue Asn-203 is glycosylated (N-linked (GlcNAc...) asparagine). Residue Ser-204 is modified to Phosphoserine. Thr-205 carries the phosphothreonine; alternate modification. O-linked (GalNAc...) threonine; alternate glycosylation occurs at Thr-205. An N-linked (GlcNAc...) asparagine glycan is attached at Asn-213. 2 O-linked (GalNAc...) threonine glycosylation sites follow: Thr-215 and Thr-225. The region spanning 227-459 is the Peptidase S1 domain; the sequence is VVGGEDAKPG…YVNWIKEKTK (233 aa). The Charge relay system role is filled by His-267. Ca(2+) contacts are provided by Glu-281, Asn-283, Glu-286, Glu-288, and Glu-291. Catalysis depends on Asp-315, which acts as the Charge relay system. Ser-411 functions as the Charge relay system in the catalytic mechanism.

Belongs to the peptidase S1 family. In terms of assembly, heterodimer of a light chain and a heavy chain; disulfide-linked. Interacts (inactive and activated) with F11 (activated) in calcium-dependent manner. Interacts with SERPINC1. Interacts (activated) with iripin-8, a serine protease inhibitor from Ixodes ricinus saliva. Interacts (inactive and activated) with nitrophorin-2, an anticoagulant protein from Rhodnius prolixus. Activated by factor XIa, which excises the activation peptide. The propeptide can also be removed by snake venom protease. Activated by coagulation factor VIIa-tissue factor (F7-F3) complex in calcium-dependent manner. In terms of processing, the iron and 2-oxoglutarate dependent 3-hydroxylation of aspartate and asparagine is (R) stereospecific within EGF domains. Detected in blood plasma (at protein level). Synthesized primarily in the liver and secreted in plasma.

Its subcellular location is the secreted. The enzyme catalyses Selective cleavage of Arg-|-Ile bond in factor X to form factor Xa.. In terms of biological role, factor IX is a vitamin K-dependent plasma protein that participates in the intrinsic pathway of blood coagulation by converting factor X to its active form in the presence of Ca(2+) ions, phospholipids, and factor VIIIa. In Homo sapiens (Human), this protein is Coagulation factor IX (F9).